The following is a 655-amino-acid chain: RalA-binding protein 1 (655 aa).

Residues 1–158 (MTECFLPPTS…KKSKDLTAAD (158 aa)) are disordered. Residue T2 is modified to N-acetylthreonine. Positions 24–33 (LTRTPSSEEI) are enriched in polar residues. 3 positions are modified to phosphoserine: S29, S30, and S34. T44 is modified (phosphothreonine). 2 positions are modified to phosphoserine: S48 and S62. The span at 52-68 (DILHEPPDVVSDDEKDH) shows a compositional bias: basic and acidic residues. Residue 69–74 (GKKKGK) coordinates ATP. The segment covering 69–79 (GKKKGKFKKKE) has biased composition (basic residues). 2 positions are modified to phosphoserine: S92 and S93. Basic residues predominate over residues 102–118 (KMKRSKGIHVFKKPSFS). Positions 102-119 (KMKRSKGIHVFKKPSFSK) are nuclear localization signal. Positions 119 to 155 (KKKEKDFKIKEKPKEEKHKEEKHKEEKHKEKKSKDLT) are enriched in basic and acidic residues. A mediates association with membranes and could form transmembrane domains region spans residues 154–219 (LTAADVVKQW…PAVFRECIDY (66 aa)). Residues 192–380 (IPLADAVERT…VVLKQVMKPL (189 aa)) form the Rho-GAP domain. A mediates interaction with RALA and RALB region spans residues 403–499 (RRQEFLLNCL…LTEQEELLAM (97 aa)). Position 418–425 (418–425 (GGIKDLSK)) interacts with ATP. S461 and S463 each carry phosphoserine. A mediates interaction with REPS1 and REPS2 region spans residues 500–655 (EQFLRRQIAS…PSRDRKETSI (156 aa)). Disordered stretches follow at residues 525-551 (QSRQ…DEEE) and 601-655 (AEQQ…ETSI). Residues 536–551 (EEYSSESESESEDEEE) show a composition bias toward acidic residues. The segment covering 624–655 (GVLEPKAAKEQPKAGKEPAKPSPSRDRKETSI) has biased composition (basic and acidic residues). S645 carries the post-translational modification Phosphoserine.

In terms of assembly, interacts with the GTP-bound form of RALA (via effector domain); during mitosis, recruits RALBP1 to the mitochondrion where it promotes DNM1L phosphorylation and mitochondrial fission. Interacts with DNM1L; mediates its mitotic kinase cyclin B-CDK1-mediated phosphorylation during mitosis to promote mitochondrial fission. Interacts with the mitotic kinase cyclin B-CDK1 during mitosis. Interacts with the GTP-bound form of RALB (via effector domain). Interacts with REPS1; the interaction is direct and does not affect RALA-binding nor GTPase activator activity of RALBP1. Interacts with REPS2; the interaction is direct and does not affect RALA-binding nor GTPase activator activity of RALBP1. Interacts with EPN1, NUMB and TFAP2A during interphase and mitosis. Interacts with AP2M1; as part of the AP2 complex. Interacts with CDC42. Interacts with RAC1. Tyrosine-phosphorylated upon stimulation of cells with EGF. In terms of processing, may undergo proteolytic cleavage to give peptides which reassemble to form a transporter complex. As to expression, expressed ubiquitously but at low levels. Shows a strong expression in the erythrocytes.

The protein resides in the cell membrane. It localises to the cytoplasm. The protein localises to the cytosol. It is found in the cytoskeleton. Its subcellular location is the spindle pole. The protein resides in the nucleus. It localises to the mitochondrion. It catalyses the reaction an S-substituted glutathione(in) + ATP + H2O = an S-substituted glutathione(out) + ADP + phosphate + H(+). The enzyme catalyses ATP + H2O + xenobioticSide 1 = ADP + phosphate + xenobioticSide 2.. It carries out the reaction leukotriene C4(in) + ATP + H2O = leukotriene C4(out) + ADP + phosphate + H(+). In terms of biological role, multifunctional protein that functions as a downstream effector of RALA and RALB. As a GTPase-activating protein/GAP can inactivate CDC42 and RAC1 by stimulating their GTPase activity. As part of the Ral signaling pathway, may also regulate ligand-dependent EGF and insulin receptors-mediated endocytosis. During mitosis, may act as a scaffold protein in the phosphorylation of EPSIN/EPN1 by the mitotic kinase cyclin B-CDK1, preventing endocytosis during that phase of the cell cycle. During mitosis, also controls mitochondrial fission as an effector of RALA. Recruited to mitochondrion by RALA, acts as a scaffold to foster the mitotic kinase cyclin B-CDK1-mediated phosphorylation and activation of DNM1L. Functionally, could also function as a primary ATP-dependent active transporter for glutathione conjugates of electrophiles. May also actively catalyze the efflux of a wide range of substrates including xenobiotics like doxorubicin (DOX) contributing to cell multidrug resistance. In Homo sapiens (Human), this protein is RalA-binding protein 1.